The following is a 61-amino-acid chain: Large ribosomal subunit protein uL30 (61 aa).

It belongs to the universal ribosomal protein uL30 family. As to quaternary structure, part of the 50S ribosomal subunit.

This Chlorobium phaeobacteroides (strain DSM 266 / SMG 266 / 2430) protein is Large ribosomal subunit protein uL30.